Here is a 347-residue protein sequence, read N- to C-terminus: Phosphoribosylformylglycinamidine cyclo-ligase (347 aa).

The protein belongs to the AIR synthase family.

It localises to the cytoplasm. The catalysed reaction is 2-formamido-N(1)-(5-O-phospho-beta-D-ribosyl)acetamidine + ATP = 5-amino-1-(5-phospho-beta-D-ribosyl)imidazole + ADP + phosphate + H(+). It participates in purine metabolism; IMP biosynthesis via de novo pathway; 5-amino-1-(5-phospho-D-ribosyl)imidazole from N(2)-formyl-N(1)-(5-phospho-D-ribosyl)glycinamide: step 2/2. The chain is Phosphoribosylformylglycinamidine cyclo-ligase from Desulfatibacillum aliphaticivorans.